The primary structure comprises 449 residues: Phosphoglucosamine mutase (449 aa).

Ser-100 acts as the Phosphoserine intermediate in catalysis. 4 residues coordinate Mg(2+): Ser-100, Asp-241, Asp-243, and Asp-245. A Phosphoserine modification is found at Ser-100.

The protein belongs to the phosphohexose mutase family. Mg(2+) serves as cofactor. In terms of processing, activated by phosphorylation.

It catalyses the reaction alpha-D-glucosamine 1-phosphate = D-glucosamine 6-phosphate. Its function is as follows. Catalyzes the conversion of glucosamine-6-phosphate to glucosamine-1-phosphate. This is Phosphoglucosamine mutase from Clostridium kluyveri (strain NBRC 12016).